The sequence spans 746 residues: Eukaryotic translation initiation factor 3 subunit B (746 aa).

Positions Met-1 to Ala-11 are enriched in basic and acidic residues. A disordered region spans residues Met-1 to Glu-20. Positions Thr-42–Asp-128 constitute an RRM domain. WD repeat units lie at residues Asp-195–Arg-234, Pro-247–Ala-294, Pro-307–Lys-346, Ile-349–Asn-386, Thr-458–Pro-500, Leu-517–Glu-560, and Ala-575–Glu-620.

The protein belongs to the eIF-3 subunit B family. As to quaternary structure, component of the eukaryotic translation initiation factor 3 (eIF-3) complex.

It is found in the cytoplasm. RNA-binding component of the eukaryotic translation initiation factor 3 (eIF-3) complex, which is involved in protein synthesis of a specialized repertoire of mRNAs and, together with other initiation factors, stimulates binding of mRNA and methionyl-tRNAi to the 40S ribosome. The eIF-3 complex specifically targets and initiates translation of a subset of mRNAs involved in cell proliferation. The polypeptide is Eukaryotic translation initiation factor 3 subunit B (Pyricularia oryzae (strain 70-15 / ATCC MYA-4617 / FGSC 8958) (Rice blast fungus)).